We begin with the raw amino-acid sequence, 67 residues long: DNA-directed RNA polymerase subunit omega (67 aa).

It belongs to the RNA polymerase subunit omega family. As to quaternary structure, the RNAP catalytic core consists of 2 alpha, 1 beta, 1 beta' and 1 omega subunit. When a sigma factor is associated with the core the holoenzyme is formed, which can initiate transcription.

It catalyses the reaction RNA(n) + a ribonucleoside 5'-triphosphate = RNA(n+1) + diphosphate. Promotes RNA polymerase assembly. Latches the N- and C-terminal regions of the beta' subunit thereby facilitating its interaction with the beta and alpha subunits. This is DNA-directed RNA polymerase subunit omega from Moorella thermoacetica (strain ATCC 39073 / JCM 9320).